Here is a 133-residue protein sequence, read N- to C-terminus: UPF0146 protein MTH_1000 (133 aa).

This sequence belongs to the UPF0146 family.

The chain is UPF0146 protein MTH_1000 from Methanothermobacter thermautotrophicus (strain ATCC 29096 / DSM 1053 / JCM 10044 / NBRC 100330 / Delta H) (Methanobacterium thermoautotrophicum).